The following is a 131-amino-acid chain: Large-conductance mechanosensitive channel (131 aa).

3 helical membrane-spanning segments follow: residues 14–34 (IMDL…VTSL), 38–58 (IIMP…LAVT), and 67–87 (GSFI…FIVI).

This sequence belongs to the MscL family. Homopentamer.

It is found in the cell membrane. In terms of biological role, channel that opens in response to stretch forces in the membrane lipid bilayer. May participate in the regulation of osmotic pressure changes within the cell. The sequence is that of Large-conductance mechanosensitive channel from Bacillus velezensis (strain DSM 23117 / BGSC 10A6 / LMG 26770 / FZB42) (Bacillus amyloliquefaciens subsp. plantarum).